The chain runs to 610 residues: Chaperone protein DnaK (610 aa).

T173 is modified (phosphothreonine; by autocatalysis). Disordered regions lie at residues 525 to 544 (ENIG…ALKT) and 576 to 610 (AAQQ…DDKK). The segment covering 529-542 (EEDKKSAEEKKDAL) has biased composition (basic and acidic residues). The segment covering 576-592 (AAQQQQQAQGANAGQNN) has biased composition (low complexity). A compositionally biased stretch (basic and acidic residues) spans 599–610 (AEFKEVKDDDKK).

Belongs to the heat shock protein 70 family.

Its function is as follows. Acts as a chaperone. This is Chaperone protein DnaK from Staphylococcus aureus (strain Mu3 / ATCC 700698).